The chain runs to 971 residues: Isoleucine--tRNA ligase (971 aa).

The 'HIGH' region motif lies at 64–74; that stretch reads PYANGHIHIGH. An L-isoleucyl-5'-AMP-binding site is contributed by glutamate 602. Positions 643 to 647 match the 'KMSKS' region motif; sequence KMSKS. Lysine 646 provides a ligand contact to ATP.

This sequence belongs to the class-I aminoacyl-tRNA synthetase family. IleS type 1 subfamily. Monomer.

Its subcellular location is the cytoplasm. The enzyme catalyses tRNA(Ile) + L-isoleucine + ATP = L-isoleucyl-tRNA(Ile) + AMP + diphosphate. Functionally, catalyzes the attachment of isoleucine to tRNA(Ile). As IleRS can inadvertently accommodate and process structurally similar amino acids such as valine, to avoid such errors it has two additional distinct tRNA(Ile)-dependent editing activities. One activity is designated as 'pretransfer' editing and involves the hydrolysis of activated Val-AMP. The other activity is designated 'posttransfer' editing and involves deacylation of mischarged Val-tRNA(Ile). The polypeptide is Isoleucine--tRNA ligase (Bartonella henselae (strain ATCC 49882 / DSM 28221 / CCUG 30454 / Houston 1) (Rochalimaea henselae)).